The primary structure comprises 312 residues: Taste receptor type 2 member 62 (312 aa).

The Extracellular segment spans residues 1–4; the sequence is MPSL. Residues 5–27 form a helical membrane-spanning segment; sequence PTLIFIAIFCLESLAAMLQNGFL. Residues 28–39 lie on the Cytoplasmic side of the membrane; that stretch reads VTMLGREWVRCR. The helical transmembrane segment at 40 to 62 threads the bilayer; that stretch reads MLSTSDMIVACLAASRFCLHGVA. Residues 63–81 are Extracellular-facing; it reads MANNLLASLDFSRAVPYMN. The helical transmembrane segment at 82–104 threads the bilayer; it reads IFWDLFNALTLWFTALLAAFYCV. Residues 105–127 are Cytoplasmic-facing; sequence KISSFSHPTFAWLKWRISRLVPK. Residues 128–150 traverse the membrane as a helical segment; the sequence is LIKGSLIICGLEVISSATGNILF. At 151–182 the chain is on the extracellular side; that stretch reads GQRKVSLSSYRNETLVYRVQASFQLYFFLYDG. N-linked (GlcNAc...) asparagine glycosylation is present at Asn-162. The chain crosses the membrane as a helical span at residues 183–205; it reads FVWSIPFLLFLVSTVLLIVSLCW. Residues 206–231 are Cytoplasmic-facing; the sequence is QLGQMRDLRPGPCDPSTQAYTMALKS. The chain crosses the membrane as a helical span at residues 232–254; it reads LTFSLIFCTLYFLSLFASALKII. At 255–258 the chain is on the extracellular side; sequence NFQN. Residues 259-281 form a helical membrane-spanning segment; the sequence is HWHWAWEVLIYANICLHSTVLVL. Residues 282 to 312 are Cytoplasmic-facing; the sequence is RSPKLKKGLKTWPQLQCPCDAGSQGFGRCWP.

The protein belongs to the G-protein coupled receptor T2R family.

It is found in the membrane. Functionally, receptor that may play a role in the perception of bitterness and is gustducin-linked. May play a role in sensing the chemical composition of the gastrointestinal content. The activity of this receptor may stimulate alpha gustducin, mediate PLC-beta-2 activation and lead to the gating of TRPM5. The protein is Taste receptor type 2 member 62 (TAS2R62) of Pan paniscus (Pygmy chimpanzee).